The sequence spans 155 residues: Large ribosomal subunit protein uL22c (155 aa).

This sequence belongs to the universal ribosomal protein uL22 family. Part of the 50S ribosomal subunit.

The protein localises to the plastid. It is found in the chloroplast. Its function is as follows. This protein binds specifically to 23S rRNA. In terms of biological role, the globular domain of the protein is located near the polypeptide exit tunnel on the outside of the subunit, while an extended beta-hairpin is found that lines the wall of the exit tunnel in the center of the 70S ribosome. This Nicotiana sylvestris (Wood tobacco) protein is Large ribosomal subunit protein uL22c (rpl22).